The chain runs to 1442 residues: DNA polymerase III PolC-type (1442 aa).

In terms of domain architecture, Exonuclease spans 409-568 (YVIFDIETTG…YDAIVLADVF (160 aa)).

The protein belongs to the DNA polymerase type-C family. PolC subfamily.

It is found in the cytoplasm. It carries out the reaction DNA(n) + a 2'-deoxyribonucleoside 5'-triphosphate = DNA(n+1) + diphosphate. Its function is as follows. Required for replicative DNA synthesis. This DNA polymerase also exhibits 3' to 5' exonuclease activity. The chain is DNA polymerase III PolC-type from Ureaplasma parvum serovar 3 (strain ATCC 700970).